A 414-amino-acid polypeptide reads, in one-letter code: NADH-dependent flavin oxidoreductase iccE (414 aa).

FMN contacts are provided by residues Thr25 to Ala28 and Gln107. His188 to His191 serves as a coordination point for substrate. Ala347–Arg348 contributes to the FMN binding site.

The protein belongs to the NADH:flavin oxidoreductase/NADH oxidase family.

It catalyses the reaction 8-epi-ilicicolin H = ilicicolin H. It participates in mycotoxin biosynthesis. In terms of biological role, NADH-dependent flavin oxidoreductase; part of the gene cluster that mediates the biosynthesis of ilicicolin H, a 4-hydroxy-2-pyridonealkaloid that has potent and broad antifungal activities by inhibiting the mitochondrial respiration chain. IccE acts as an epimerase and catalyzes the conversion of 8-epi-ilicicolin H into the final product ilicicolin H. The biosynthesis of ilicicolin H starts with formation of the tetramic acid by the hybrid PKS-NRPS synthetase iccA with the partnering trans-enoyl reductase iccB since iccA lacks a designated enoylreductase (ER) domain. The cytochrome P450 monooxygenase iccC then catalyzes the ring expansion of the tetramate to the acyclic 2-pyridone. The pericyclase iccD further converts the acyclic 2-pyridone into 8-epi-ilicicolin H. Finally, the epimerase iccE converts 8-epi-ilicicolin H into ilicicolin H via epimerization. IccA to iccE are sufficient for ilicicolin H biosynthesis and the roles of the remaining enzymes, iccF, iccG and iccH within the pathway have still to be determined. This Talaromyces variabilis (Penicillium variabile) protein is NADH-dependent flavin oxidoreductase iccE.